Here is a 306-residue protein sequence, read N- to C-terminus: Ornithine carbamoyltransferase (306 aa).

Residues serine 53–threonine 56, glutamine 80, arginine 104, and histidine 131–glutamine 134 each bind carbamoyl phosphate. Residues asparagine 162, aspartate 219, and serine 223–methionine 224 contribute to the L-ornithine site. Carbamoyl phosphate contacts are provided by residues cysteine 259–leucine 260 and arginine 287.

This sequence belongs to the aspartate/ornithine carbamoyltransferase superfamily. OTCase family.

It is found in the cytoplasm. The catalysed reaction is carbamoyl phosphate + L-ornithine = L-citrulline + phosphate + H(+). The protein operates within amino-acid biosynthesis; L-arginine biosynthesis; L-arginine from L-ornithine and carbamoyl phosphate: step 1/3. Its function is as follows. Reversibly catalyzes the transfer of the carbamoyl group from carbamoyl phosphate (CP) to the N(epsilon) atom of ornithine (ORN) to produce L-citrulline. The protein is Ornithine carbamoyltransferase of Psychrobacter sp. (strain PRwf-1).